We begin with the raw amino-acid sequence, 217 residues long: MMSLGLVGRKVGMTRIFTAEGDSIPVTVLDVSDNRVTQIKTVETDGYTAVQVAFGSRRASRVTKPLAGHLAKAGVEAGEILKEFRIDAAKAAELSNGAVVGADLFEVGQKVDVQGVSIGKGYAGTIKRYNFSSGRATHGNSRSHNVPGSIGMAQDPGRVFPGKRMTGHMGDVTVTVQNLEIARIDAERKLLLVKGAIPGAKGGKVFVTPAVKTKGAK.

Over residues 134-146 the composition is skewed to polar residues; the sequence is GRATHGNSRSHNV. Positions 134–154 are disordered; sequence GRATHGNSRSHNVPGSIGMAQ. Gln-154 carries the N5-methylglutamine modification.

This sequence belongs to the universal ribosomal protein uL3 family. Part of the 50S ribosomal subunit. Forms a cluster with proteins L14 and L19. Methylated by PrmB.

In terms of biological role, one of the primary rRNA binding proteins, it binds directly near the 3'-end of the 23S rRNA, where it nucleates assembly of the 50S subunit. This is Large ribosomal subunit protein uL3 from Burkholderia cenocepacia (strain HI2424).